The chain runs to 409 residues: UV excision repair protein RAD23 homolog B (409 aa).

In terms of domain architecture, Ubiquitin-like spans 1–79 (MQVTLKTLQQ…VVVMVTKPKA (79 aa)). The segment at 80 to 175 (VSTPAPATTQ…STSGDSSRSN (96 aa)) is disordered. Over residues 81 to 143 (STPAPATTQQ…SSEPAPASAA (63 aa)) the composition is skewed to low complexity. A compositionally biased stretch (basic and acidic residues) spans 144–153 (KQEKPAEKPA). Thr155 is subject to Phosphothreonine. Ser160 is subject to Phosphoserine. The span at 160–175 (SPTATDSTSGDSSRSN) shows a compositional bias: polar residues. Thr164 bears the Phosphothreonine mark. A Phosphoserine modification is found at Ser174. Position 186 is a phosphothreonine (Thr186). A UBA 1 domain is found at 188–228 (QSYENMVTEIMSMGYEREQVIAALRASFNNPDRAVEYLLMG). Ser199 carries the post-translational modification Phosphoserine. Tyr202 is modified (phosphotyrosine). Residues 236 to 276 (QAVVDPPQAASTGAPQSSAVAAAAATTTATTTTTSSGGHPL) are disordered. Over residues 252-271 (SSAVAAAAATTTATTTTTSS) the composition is skewed to low complexity. The STI1 domain maps to 274-317 (HPLEFLRNQPQFQQMRQIIQQNPSLLPALLQQIGRENPQLLQQI). The UBA 2 domain occupies 364 to 404 (PQEKEAIERLKALGFPEGLVIQAYFACEKNENLAANFLLQQ).

The protein belongs to the RAD23 family. As to quaternary structure, component of the XPC complex composed of XPC, RAD23B and CETN2. Interacts with NGLY1 and PSMC1. Interacts with ATXN3. Interacts with PSMD4 and PSMC5. Interacts with AMFR. Interacts with VCP; the interaction is indirect and mediated by NGLY1.

The protein localises to the nucleus. It is found in the cytoplasm. Functionally, multiubiquitin chain receptor involved in modulation of proteasomal degradation. Binds to polyubiquitin chains. Proposed to be capable to bind simultaneously to the 26S proteasome and to polyubiquitinated substrates and to deliver ubiquitinated proteins to the proteasome. May play a role in endoplasmic reticulum-associated degradation (ERAD) of misfolded glycoproteins by association with PNGase and delivering deglycosylated proteins to the proteasome. Its function is as follows. Involved in global genome nucleotide excision repair (GG-NER) by acting as component of the XPC complex. Cooperatively with CETN2 appears to stabilize XPC. May protect XPC from proteasomal degradation. In terms of biological role, the XPC complex is proposed to represent the first factor bound at the sites of DNA damage and together with other core recognition factors, XPA, RPA and the TFIIH complex, is part of the pre-incision (or initial recognition) complex. The XPC complex recognizes a wide spectrum of damaged DNA characterized by distortions of the DNA helix such as single-stranded loops, mismatched bubbles or single-stranded overhangs. The orientation of XPC complex binding appears to be crucial for inducing a productive NER. XPC complex is proposed to recognize and to interact with unpaired bases on the undamaged DNA strand which is followed by recruitment of the TFIIH complex and subsequent scanning for lesions in the opposite strand in a 5'-to-3' direction by the NER machinery. Cyclobutane pyrimidine dimers (CPDs) which are formed upon UV-induced DNA damage esacpe detection by the XPC complex due to a low degree of structural perurbation. Instead they are detected by the UV-DDB complex which in turn recruits and cooperates with the XPC complex in the respective DNA repair. In vitro, the XPC:RAD23B dimer is sufficient to initiate NER; it preferentially binds to cisplatin and UV-damaged double-stranded DNA and also binds to a variety of chemically and structurally diverse DNA adducts. XPC:RAD23B contacts DNA both 5' and 3' of a cisplatin lesion with a preference for the 5' side. XPC:RAD23B induces a bend in DNA upon binding. XPC:RAD23B stimulates the activity of DNA glycosylases TDG and SMUG1. The polypeptide is UV excision repair protein RAD23 homolog B (RAD23B) (Homo sapiens (Human)).